We begin with the raw amino-acid sequence, 590 residues long: Suprabasin (590 aa).

Residues 1–25 (MHLARLVGSCSLLLLLGALSGWAAS) form the signal peptide. Disordered stretches follow at residues 182–213 (GNEA…AHHG), 242–266 (FGQG…GVHH), 297–338 (GQGA…GVHH), and 545–570 (LNGN…SGAS). Composition is skewed to low complexity over residues 190–200 (QGVHHAAGQAG), 243–254 (GQGAHHAAGQAG), 297–330 (GQGA…NEAG), and 546–559 (NGNH…HQGG). Polar residues predominate over residues 560 to 570 (ATTTPLASGAS).

Detected in thymus, uterus and esophagus.

The protein localises to the secreted. The protein is Suprabasin (SBSN) of Homo sapiens (Human).